The following is a 276-amino-acid chain: Undecaprenyl-diphosphatase 1 (276 aa).

Helical transmembrane passes span 4-24, 46-63, 83-103, 108-128, 187-207, 217-237, and 252-272; these read ILIC…FLPV, TFDV…CWEY, FTLN…LFEK, VLFS…IILW, VATE…TLYE, VDSL…AFVC, and VFAW…YSGW.

This sequence belongs to the UppP family.

Its subcellular location is the cell inner membrane. The catalysed reaction is di-trans,octa-cis-undecaprenyl diphosphate + H2O = di-trans,octa-cis-undecaprenyl phosphate + phosphate + H(+). Catalyzes the dephosphorylation of undecaprenyl diphosphate (UPP). Confers resistance to bacitracin. This Burkholderia lata (strain ATCC 17760 / DSM 23089 / LMG 22485 / NCIMB 9086 / R18194 / 383) protein is Undecaprenyl-diphosphatase 1.